Here is a 187-residue protein sequence, read N- to C-terminus: Ribosome-recycling factor (187 aa).

Belongs to the RRF family.

It localises to the cytoplasm. In terms of biological role, responsible for the release of ribosomes from messenger RNA at the termination of protein biosynthesis. May increase the efficiency of translation by recycling ribosomes from one round of translation to another. This chain is Ribosome-recycling factor, found in Methylorubrum populi (strain ATCC BAA-705 / NCIMB 13946 / BJ001) (Methylobacterium populi).